The following is a 77-amino-acid chain: Conotoxin Mr8.2 (77 aa).

Residues 1–16 (MLRLITAAVLVSACLA) form the signal peptide. A propeptide spanning residues 17-32 (YPQKKRTPPQTRPTSR) is cleaved from the precursor.

The protein belongs to the conotoxin B2 family. Contains 5 disulfide bonds. In terms of tissue distribution, expressed by the venom duct.

The protein localises to the secreted. This chain is Conotoxin Mr8.2, found in Conus marmoreus (Marble cone).